Reading from the N-terminus, the 127-residue chain is Aspartate 1-decarboxylase (127 aa).

The active-site Schiff-base intermediate with substrate; via pyruvic acid is the Ser-25. Ser-25 bears the Pyruvic acid (Ser) mark. Thr-57 contributes to the substrate binding site. The active-site Proton donor is the Tyr-58. 73 to 75 (GAA) contacts substrate.

This sequence belongs to the PanD family. In terms of assembly, heterooctamer of four alpha and four beta subunits. The cofactor is pyruvate. Post-translationally, is synthesized initially as an inactive proenzyme, which is activated by self-cleavage at a specific serine bond to produce a beta-subunit with a hydroxyl group at its C-terminus and an alpha-subunit with a pyruvoyl group at its N-terminus.

Its subcellular location is the cytoplasm. The catalysed reaction is L-aspartate + H(+) = beta-alanine + CO2. It functions in the pathway cofactor biosynthesis; (R)-pantothenate biosynthesis; beta-alanine from L-aspartate: step 1/1. Catalyzes the pyruvoyl-dependent decarboxylation of aspartate to produce beta-alanine. This is Aspartate 1-decarboxylase from Trichormus variabilis (strain ATCC 29413 / PCC 7937) (Anabaena variabilis).